A 924-amino-acid chain; its full sequence is Protein translocase subunit SecA (924 aa).

ATP contacts are provided by residues Gln87, 105 to 109 (GEGKT), and Asp515. Positions 908, 910, 919, and 920 each coordinate Zn(2+).

The protein belongs to the SecA family. As to quaternary structure, monomer and homodimer. Part of the essential Sec protein translocation apparatus which comprises SecA, SecYEG and auxiliary proteins SecDF-YajC and YidC. It depends on Zn(2+) as a cofactor.

The protein localises to the cell inner membrane. The protein resides in the cytoplasm. The catalysed reaction is ATP + H2O + cellular proteinSide 1 = ADP + phosphate + cellular proteinSide 2.. Part of the Sec protein translocase complex. Interacts with the SecYEG preprotein conducting channel. Has a central role in coupling the hydrolysis of ATP to the transfer of proteins into and across the cell membrane, serving both as a receptor for the preprotein-SecB complex and as an ATP-driven molecular motor driving the stepwise translocation of polypeptide chains across the membrane. This is Protein translocase subunit SecA from Cupriavidus pinatubonensis (strain JMP 134 / LMG 1197) (Cupriavidus necator (strain JMP 134)).